A 102-amino-acid polypeptide reads, in one-letter code: Acid shock protein (102 aa).

An N-terminal signal peptide occupies residues 1-21; the sequence is MKKVLALVVAAAMGLSSAAFA. The span at 22 to 41 shows a compositional bias: low complexity; it reads AETATTPAPTATTTKAAPAK. Residues 22–58 constitute a propeptide that is removed on maturation; it reads AETATTPAPTATTTKAAPAKTTHHKKQHKAAPAQKAQ. Residues 22–102 are disordered; it reads AETATTPAPT…PAKPAAQPAA (81 aa). Basic residues predominate over residues 80 to 90; it reads AAKKHAGKHGH. Low complexity predominate over residues 91–102; sequence QQPAKPAAQPAA.

Belongs to the Asr family. In terms of processing, proteolytic processing gives rise to the active protein.

The protein resides in the periplasm. Functionally, required for growth and/or survival at acidic conditions. This is Acid shock protein from Shigella flexneri.